Reading from the N-terminus, the 38-residue chain is Potassium channel toxin alpha-KTx 3.8 (38 aa).

Intrachain disulfides connect cysteine 8–cysteine 28, cysteine 14–cysteine 33, and cysteine 18–cysteine 35. The interaction with Ca(2+)-activated K(+) channels stretch occupies residues 26–33 (GKCMNGKC).

In terms of tissue distribution, expressed by the venom gland.

The protein resides in the secreted. Potassium channel inhibitor. This chain is Potassium channel toxin alpha-KTx 3.8, found in Hottentotta tamulus sindicus (Scorpion).